A 141-amino-acid chain; its full sequence is Hemoglobin subunit alpha-A (141 aa).

A Globin domain is found at 1-141 (VLSGTDKTNV…VGAVLTAKYR (141 aa)). O2 is bound at residue H58. Residue H87 coordinates heme b.

Belongs to the globin family. Heterotetramer of two alpha chains and two beta chains. As to expression, red blood cells.

In terms of biological role, involved in oxygen transport from the lung to the various peripheral tissues. The protein is Hemoglobin subunit alpha-A (HBAA) of Struthio camelus (Common ostrich).